We begin with the raw amino-acid sequence, 116 residues long: M-zodatoxin-Lt6a/c (116 aa).

The signal sequence occupies residues 1-22 (MKYFVVALTLAVAFVCIEECKT). 2 consecutive propeptides follow at residues 23–44 (VEIG…DEAR) and 80–83 (EEAR). 2 consecutive short sequence motifs (processing quadruplet motif) follow at residues 41-44 (DEAR) and 80-83 (EEAR). At Gln-84 the chain carries Pyrrolidone carboxylic acid.

It belongs to the cationic peptide 03 (latarcin) family. 06 subfamily. Cleavage of the propeptide depends on the processing quadruplet motif (XXXR, with at least one of X being E). As to expression, expressed by the venom gland.

Its subcellular location is the secreted. Does not have antimicrobial activity against Gram-positive bacteria (A.globiformis VKM Ac-1112 (MIC&gt;70 uM) and B.subtilis VKM B-501 (MIC&gt;70 uM)), Gram-negative bacteria (E.coli DH5-alpha (MIC&gt;70 uM), E.coli MH1 (MIC&gt;70 uM) and P.aeruginosa PAO1 (MIC&gt;70 uM)), yeast (P.pastoris GS115 (MIC&gt;70 uM) or S.cerevisiae Y190 (MIC&gt;70 uM)). Does not have hemolytic activity against rabbit erythrocytes. However, it causes some conductance changes in planar bilayer membranes, without membrane rupture, suggesting a cytolytic function on other biological targets. It causes paralysis, but is not lethal when injected into insect larvae. This is M-zodatoxin-Lt6a/c from Lachesana tarabaevi (Spider).